A 782-amino-acid chain; its full sequence is Fibrinogen alpha chain (782 aa).

A signal peptide spans 1–19 (MLSLRVACLILSLASTVWT). Residues 68 to 547 (GCRMKGLIDE…KRGRARTMRD (480 aa)) are a coiled coil. Over residues 264 to 283 (RPGKDGASRGDLPGDSRGDS) the composition is skewed to basic and acidic residues. The segment at 264-374 (RPGKDGASRG…PATRKEYHTG (111 aa)) is disordered. A Phosphoserine modification is found at serine 279. The span at 311 to 323 (SGSGSDGNWGSGT) shows a compositional bias: gly residues. Low complexity-rich tracts occupy residues 324-344 (TGSDDTGTWGAGSSRPSSGSG) and 354-364 (GEFSEFGGSSS). At serine 326 the chain carries Phosphoserine. Cysteines 404 and 434 form a disulfide. Serine 470 carries the phosphoserine modification. Proline 499 is modified (4-hydroxyproline; by P4HA1). The span at 522–536 (DEAASEAHQEGDTRT) shows a compositional bias: basic and acidic residues. Residues 522–542 (DEAASEAHQEGDTRTTKRGRA) form a disordered region. Serine 526 is subject to Phosphoserine. Residues 539–780 (RGRARTMRDC…AVRMKIRPLV (242 aa)) enclose the Fibrinogen C-terminal domain. Asparagine 602 is a glycosylation site (N-linked (GlcNAc...) asparagine). Ca(2+) is bound by residues aspartate 707, aspartate 709, tryptophan 711, and glutamate 713. A disulfide bridge links cysteine 715 with cysteine 728.

As to quaternary structure, heterohexamer; disulfide linked. Contains 2 sets of 3 non-identical chains (alpha, beta and gamma). The 2 heterotrimers are in head to head conformation with the N-termini in a small central domain. Post-translationally, conversion of fibrinogen to fibrin is triggered by thrombin, which cleaves fibrinopeptides A and B from alpha and beta chains, and thus exposes the N-terminal polymerization sites responsible for the formation of the soft clot. The soft clot is converted into the hard clot by factor XIIIA which catalyzes the epsilon-(gamma-glutamyl)lysine cross-linking between gamma chains (stronger) and between alpha chains (weaker) of different monomers. In terms of processing, forms F13A-mediated cross-links between a glutamine and the epsilon-amino group of a lysine residue, forming fibronectin-fibrinogen heteropolymers. Phosphorylated by FAM20C in the extracellular medium.

It is found in the secreted. Functionally, cleaved by the protease thrombin to yield monomers which, together with fibrinogen beta (FGB) and fibrinogen gamma (FGG), polymerize to form an insoluble fibrin matrix. Fibrin has a major function in hemostasis as one of the primary components of blood clots. In addition, functions during the early stages of wound repair to stabilize the lesion and guide cell migration during re-epithelialization. Was originally thought to be essential for platelet aggregation, based on in vitro studies using anticoagulated blood. However, subsequent studies have shown that it is not absolutely required for thrombus formation in vivo. Enhances expression of SELP in activated platelets via an ITGB3-dependent pathway. Maternal fibrinogen is essential for successful pregnancy. Fibrin deposition is also associated with infection, where it protects against IFNG-mediated hemorrhage. May also facilitate the immune response via both innate and T-cell mediated pathways. This Rattus norvegicus (Rat) protein is Fibrinogen alpha chain (Fga).